Reading from the N-terminus, the 102-residue chain is Protein 108 (102 aa).

The signal sequence occupies residues Met1–Ser30. Cystine bridges form between Cys41–Cys77, Cys51–Cys66, Cys67–Cys92, and Cys79–Cys99.

Belongs to the A9/FIL1 family. As to expression, stamen- and tapetum-specific.

The protein localises to the secreted. The polypeptide is Protein 108 (Solanum lycopersicum (Tomato)).